The primary structure comprises 64 residues: uncharacterized protein (64 aa).

Residues 1–64 (MMITRGWEGW…LDPAISRSSS (64 aa)) form a disordered region. Residues 16-28 (RGAGTGTGLGGPG) show a composition bias toward gly residues.

This is an uncharacterized protein from Homo sapiens (Human).